Consider the following 215-residue polypeptide: Thiamine-phosphate synthase 1 (215 aa).

4-amino-2-methyl-5-(diphosphooxymethyl)pyrimidine-binding positions include 35–39 and asparagine 67; that span reads QYRFE. 2 residues coordinate Mg(2+): aspartate 68 and aspartate 87. Threonine 106 contacts 4-amino-2-methyl-5-(diphosphooxymethyl)pyrimidine. 132–134 provides a ligand contact to 2-[(2R,5Z)-2-carboxy-4-methylthiazol-5(2H)-ylidene]ethyl phosphate; the sequence is TST. Lysine 135 is a binding site for 4-amino-2-methyl-5-(diphosphooxymethyl)pyrimidine. Residue glycine 162 coordinates 2-[(2R,5Z)-2-carboxy-4-methylthiazol-5(2H)-ylidene]ethyl phosphate.

The protein belongs to the thiamine-phosphate synthase family. Mg(2+) is required as a cofactor.

The catalysed reaction is 2-[(2R,5Z)-2-carboxy-4-methylthiazol-5(2H)-ylidene]ethyl phosphate + 4-amino-2-methyl-5-(diphosphooxymethyl)pyrimidine + 2 H(+) = thiamine phosphate + CO2 + diphosphate. It catalyses the reaction 2-(2-carboxy-4-methylthiazol-5-yl)ethyl phosphate + 4-amino-2-methyl-5-(diphosphooxymethyl)pyrimidine + 2 H(+) = thiamine phosphate + CO2 + diphosphate. It carries out the reaction 4-methyl-5-(2-phosphooxyethyl)-thiazole + 4-amino-2-methyl-5-(diphosphooxymethyl)pyrimidine + H(+) = thiamine phosphate + diphosphate. The protein operates within cofactor biosynthesis; thiamine diphosphate biosynthesis; thiamine phosphate from 4-amino-2-methyl-5-diphosphomethylpyrimidine and 4-methyl-5-(2-phosphoethyl)-thiazole: step 1/1. Its function is as follows. Condenses 4-methyl-5-(beta-hydroxyethyl)thiazole monophosphate (THZ-P) and 2-methyl-4-amino-5-hydroxymethyl pyrimidine pyrophosphate (HMP-PP) to form thiamine monophosphate (TMP). The polypeptide is Thiamine-phosphate synthase 1 (Aquifex aeolicus (strain VF5)).